We begin with the raw amino-acid sequence, 515 residues long: 2,3-bisphosphoglycerate-independent phosphoglycerate mutase (515 aa).

Mn(2+) contacts are provided by D14 and S64. S64 functions as the Phosphoserine intermediate in the catalytic mechanism. Residues H125, 155 to 156 (RD), R187, R193, 263 to 266 (RADR), and K337 each bind substrate. D404, H408, D445, H446, and H464 together coordinate Mn(2+).

This sequence belongs to the BPG-independent phosphoglycerate mutase family. As to quaternary structure, monomer. The cofactor is Mn(2+).

It catalyses the reaction (2R)-2-phosphoglycerate = (2R)-3-phosphoglycerate. It functions in the pathway carbohydrate degradation; glycolysis; pyruvate from D-glyceraldehyde 3-phosphate: step 3/5. Catalyzes the interconversion of 2-phosphoglycerate and 3-phosphoglycerate. The protein is 2,3-bisphosphoglycerate-independent phosphoglycerate mutase of Pseudomonas aeruginosa (strain UCBPP-PA14).